The following is a 157-amino-acid chain: Transcription elongation factor GreA (157 aa).

The protein belongs to the GreA/GreB family.

Functionally, necessary for efficient RNA polymerase transcription elongation past template-encoded arresting sites. The arresting sites in DNA have the property of trapping a certain fraction of elongating RNA polymerases that pass through, resulting in locked ternary complexes. Cleavage of the nascent transcript by cleavage factors such as GreA or GreB allows the resumption of elongation from the new 3'terminus. GreA releases sequences of 2 to 3 nucleotides. The polypeptide is Transcription elongation factor GreA (Azorhizobium caulinodans (strain ATCC 43989 / DSM 5975 / JCM 20966 / LMG 6465 / NBRC 14845 / NCIMB 13405 / ORS 571)).